A 145-amino-acid chain; its full sequence is Aminoglycoside N(6')-acetyltransferase type 1 (145 aa).

Residues 1–145 (MDIRQMNKTH…ERVIFYRKRC (145 aa)) form the N-acetyltransferase domain. Residues tryptophan 22, histidine 25, tyrosine 66, and glutamate 79 each coordinate substrate. Acetyl-CoA is bound by residues 81 to 83 (IFV) and 89 to 94 (QRGVAK). Substrate is bound at residue aspartate 115. Asparagine 120 is a binding site for acetyl-CoA. A substrate-binding site is contributed by glutamate 136.

Homodimer.

The enzyme catalyses kanamycin B + acetyl-CoA = N(6')-acetylkanamycin B + CoA + H(+). Catalyzes the transfer of an acetyl group from acetyl-CoA to the 6'-amino group of aminoglycoside molecules conferring resistance to antibiotics containing the purpurosamine ring including amikacin, tobramycin, dibekacin and ribostamycin. Able to acetylate eukaryotic histone proteins. The chain is Aminoglycoside N(6')-acetyltransferase type 1 from Salmonella enteritidis.